Consider the following 699-residue polypeptide: SPS-sensor serine protease component SSY5 (699 aa).

2 disordered regions span residues 1 to 113 and 129 to 158; these read MVRF…LQGF and VKEE…GNAR. A propeptide spanning residues 1 to 381 is cleaved from the precursor; sequence MVRFFGLNKE…YCVKDYIKKA (381 aa). Positions 8–18 are enriched in basic and acidic residues; the sequence is NKEKNEEKENT. Over residues 24 to 38 the composition is skewed to polar residues; the sequence is NEQNAAETSSSNVSG. Residues 39–51 are compositionally biased toward basic and acidic residues; it reads NEERIDPNSRDTN. Residues 61–78 show a composition bias toward low complexity; that stretch reads STTFGSSIQSSSIFSRGR. The span at 83-93 shows a compositional bias: polar residues; sequence TGASSSMATSE. Low complexity predominate over residues 144–154; sequence SSSTSSTLATS. A serine protease region spans residues 459–699; sequence FAITCAHVVL…QWDIDPQLDG (241 aa). Active-site charge relay system residues include His-465, Asp-545, and Ser-640.

The protein belongs to the peptidase S64 family. In terms of assembly, component of the plasma membrane SPS (SSY1-PTR3-SSY5) amino acid sensor complex. In terms of processing, the propeptide is autoproteolytically cleaved from the catalytic domain but remains associated, forming an inactive protease complex. This processing occurs even in the absence of signaling.

The protein localises to the cell membrane. Its function is as follows. Protease component of the SPS-sensor system, which regulates the expression of several amino acid-metabolizing enzymes and amino acid- and peptide-permeases in response to extracellular amino acid levels by controlling the activity of two transcription factors, STP1 and STP2. Catalyzes the activation of these transcription factors, which are synthesized as latent cytoplasmic precursors, by proteolytic removal of an N-terminal inhibitory domain containing cytoplasmic retention motifs. SSY5 binds as an inactive protease complex to STP1. In response to extracellular amino acids and dependent on the other SPS-sensor components, the inhibitory propeptide is induced to dissociate, and thereby enables the catalytic domain to process STP1. The chain is SPS-sensor serine protease component SSY5 (SSY5) from Saccharomyces cerevisiae (strain AWRI1631) (Baker's yeast).